Consider the following 162-residue polypeptide: Sec-independent protein translocase protein TatB (162 aa).

The helical transmembrane segment at 1 to 21 threads the bilayer; the sequence is MFDIGFLEIIVIMVIALIVIG. A disordered region spans residues 86-162; it reads IQDEFGIDQE…ESTPESSNKS (77 aa). Over residues 108 to 117 the composition is skewed to polar residues; sequence FSGTQFNKAP. Over residues 123–135 the composition is skewed to low complexity; the sequence is PTTEESPSSTPET. Over residues 147-162 the composition is skewed to polar residues; it reads DVSAPSESTPESSNKS.

The protein belongs to the TatB family. In terms of assembly, the Tat system comprises two distinct complexes: a TatABC complex, containing multiple copies of TatA, TatB and TatC subunits, and a separate TatA complex, containing only TatA subunits. Substrates initially bind to the TatABC complex, which probably triggers association of the separate TatA complex to form the active translocon.

It is found in the cell inner membrane. In terms of biological role, part of the twin-arginine translocation (Tat) system that transports large folded proteins containing a characteristic twin-arginine motif in their signal peptide across membranes. Together with TatC, TatB is part of a receptor directly interacting with Tat signal peptides. TatB may form an oligomeric binding site that transiently accommodates folded Tat precursor proteins before their translocation. This is Sec-independent protein translocase protein TatB from Hydrogenovibrio crunogenus (strain DSM 25203 / XCL-2) (Thiomicrospira crunogena).